The primary structure comprises 60 residues: U20-myrmicitoxin-Mri1a (60 aa).

Residues 1 to 24 form the signal peptide; sequence MKSVILLFAVIAIIVAVIIPAING. A propeptide spanning residues 25-34 is cleaved from the precursor; that stretch reads ESSSNPSANA.

The protein belongs to the formicidae venom precursor-01 superfamily. In terms of tissue distribution, expressed by the venom gland.

It localises to the secreted. In terms of biological role, induces paralysis 5 minutes after injection into blowflies (L.caesar), and then death within 24 hours. May have antimicrobial properties, like most ant linear peptides. The chain is U20-myrmicitoxin-Mri1a from Manica rubida (European giant red ant).